Here is an 86-residue protein sequence, read N- to C-terminus: Sodium channel neurotoxin MeuNaTxalpha-5 (86 aa).

An N-terminal signal peptide occupies residues 1–19 (MNYLILISFALLVITGVES). The 65-residue stretch at 21–85 (RDAYIAKPHN…VPIRIPGKCH (65 aa)) folds into the LCN-type CS-alpha/beta domain. 4 cysteine pairs are disulfide-bonded: cysteine 31–cysteine 84, cysteine 35–cysteine 57, cysteine 43–cysteine 67, and cysteine 47–cysteine 69. Residue arginine 86 is a propeptide, removed by a carboxypeptidase.

The protein belongs to the long (4 C-C) scorpion toxin superfamily. Sodium channel inhibitor family. Alpha subfamily. In terms of tissue distribution, expressed by the venom gland.

The protein resides in the secreted. In terms of biological role, alpha toxins bind voltage-independently at site-3 of sodium channels (Nav) and inhibit the inactivation of the activated channels, thereby blocking neuronal transmission. This toxin inhibits inactivation of Nav1.6/SCN8A (EC(50)=790 nM) and drosophila DmNav1 (EC(50)=280 nM). The toxin (1 uM) does not significantly shift the midpoint of activation at the two channels, but induces a significant depolarizing shift in the V(1/2) of inactivation of the channels. Has antimicrobial activity. This chain is Sodium channel neurotoxin MeuNaTxalpha-5, found in Mesobuthus eupeus (Lesser Asian scorpion).